We begin with the raw amino-acid sequence, 405 residues long: Replication factor C large subunit (405 aa).

47–54 (GPPGVGKT) is a binding site for ATP.

Belongs to the activator 1 small subunits family. RfcL subfamily. As to quaternary structure, heteropentamer composed of four small subunits (RfcS) and one large subunit (RfcL). Probably interacts with PCNA subunit PCNA3.

Functionally, part of the RFC clamp loader complex which loads the PCNA sliding clamp onto DNA. The complex possesses DNA-dependent ATPase activity. The polypeptide is Replication factor C large subunit (rfcL) (Saccharolobus solfataricus (strain ATCC 35092 / DSM 1617 / JCM 11322 / P2) (Sulfolobus solfataricus)).